A 724-amino-acid chain; its full sequence is Catalase-peroxidase (724 aa).

The tryptophyl-tyrosyl-methioninium (Trp-Tyr) (with M-252) cross-link spans 98–226; it reads WHAAGSYRTA…LAAVQMGLIY (129 aa). Catalysis depends on His-99, which acts as the Proton acceptor. Residues 226 to 252 constitute a cross-link (tryptophyl-tyrosyl-methioninium (Tyr-Met) (with W-98)); sequence YVNPQGVNGEPDPLRTALHVRETFARM. His-267 serves as a coordination point for heme b.

It belongs to the peroxidase family. Peroxidase/catalase subfamily. As to quaternary structure, homodimer or homotetramer. The cofactor is heme b. Formation of the three residue Trp-Tyr-Met cross-link is important for the catalase, but not the peroxidase activity of the enzyme.

It carries out the reaction H2O2 + AH2 = A + 2 H2O. The enzyme catalyses 2 H2O2 = O2 + 2 H2O. Functionally, bifunctional enzyme with both catalase and broad-spectrum peroxidase activity. This chain is Catalase-peroxidase, found in Cereibacter sphaeroides (strain ATCC 17025 / ATH 2.4.3) (Rhodobacter sphaeroides).